The following is a 325-amino-acid chain: Phosphatidylglycerol--prolipoprotein diacylglyceryl transferase (325 aa).

The next 4 membrane-spanning stretches (helical) occupy residues 19 to 39 (IPLR…VWFG), 47 to 67 (GGKA…GLVG), 93 to 113 (IWEG…GAWI), and 119 to 139 (GIPL…AQAI). An a 1,2-diacyl-sn-glycero-3-phospho-(1'-sn-glycerol)-binding site is contributed by R141. 3 helical membrane-spanning segments follow: residues 175–195 (HPTF…VIWA), 207–225 (FALY…EYMR), and 237–257 (LNVW…VISA). The span at 266–312 (IVEPDRDATPAEKDGSGEDGSGEKGVAKADAAAKDPLTKDEPGKDAT) shows a compositional bias: basic and acidic residues. Residues 266–325 (IVEPDRDATPAEKDGSGEDGSGEKGVAKADAAAKDPLTKDEPGKDATAENAGAAGAAEKA) form a disordered region. The span at 313-325 (AENAGAAGAAEKA) shows a compositional bias: low complexity.

The protein belongs to the Lgt family.

It is found in the cell membrane. It carries out the reaction L-cysteinyl-[prolipoprotein] + a 1,2-diacyl-sn-glycero-3-phospho-(1'-sn-glycerol) = an S-1,2-diacyl-sn-glyceryl-L-cysteinyl-[prolipoprotein] + sn-glycerol 1-phosphate + H(+). Its pathway is protein modification; lipoprotein biosynthesis (diacylglyceryl transfer). Catalyzes the transfer of the diacylglyceryl group from phosphatidylglycerol to the sulfhydryl group of the N-terminal cysteine of a prolipoprotein, the first step in the formation of mature lipoproteins. The protein is Phosphatidylglycerol--prolipoprotein diacylglyceryl transferase of Streptomyces griseus subsp. griseus (strain JCM 4626 / CBS 651.72 / NBRC 13350 / KCC S-0626 / ISP 5235).